We begin with the raw amino-acid sequence, 206 residues long: Outer-membrane lipoprotein carrier protein (206 aa).

An N-terminal signal peptide occupies residues 1–20 (MRLIRMLLPVLALTTLTAHA).

This sequence belongs to the LolA family. In terms of assembly, monomer.

The protein resides in the periplasm. In terms of biological role, participates in the translocation of lipoproteins from the inner membrane to the outer membrane. Only forms a complex with a lipoprotein if the residue after the N-terminal Cys is not an aspartate (The Asp acts as a targeting signal to indicate that the lipoprotein should stay in the inner membrane). The chain is Outer-membrane lipoprotein carrier protein from Pseudomonas fluorescens (strain Pf0-1).